A 494-amino-acid chain; its full sequence is Succinoglycan biosynthesis transport protein ExoT (494 aa).

A run of 13 helical transmembrane segments spans residues 16-36, 44-64, 82-102, 105-125, 157-177, 215-235, 253-273, 297-317, 321-341, 343-363, 384-404, 421-441, and 447-467; these read WSVL…PILA, FGAV…GGAG, SVFW…FVFA, LATL…SLLI, LGAV…SLLA, FGMM…MVVI, FASI…FPTF, LLAP…LVLF, WAYA…LTPC, TFIP…WALI, AMIW…WVVF, PMIA…HFGA, and VLQL…LILL.

It belongs to the polysaccharide synthase family.

Its subcellular location is the cell membrane. It functions in the pathway glycan metabolism; exopolysaccharide biosynthesis. This Rhizobium meliloti (strain 1021) (Ensifer meliloti) protein is Succinoglycan biosynthesis transport protein ExoT (exoT).